Reading from the N-terminus, the 87-residue chain is Small ribosomal subunit protein bS20 (87 aa).

Residues 1 to 29 (MANTAQARKRARQAVKQNAHNSSQRSTLR) form a disordered region. Residues 20 to 29 (HNSSQRSTLR) are compositionally biased toward polar residues.

Belongs to the bacterial ribosomal protein bS20 family.

Functionally, binds directly to 16S ribosomal RNA. The polypeptide is Small ribosomal subunit protein bS20 (Herminiimonas arsenicoxydans).